Consider the following 259-residue polypeptide: MAYFSGLSDALRLTFVQIMILSAIAVVIFLYGMIGNFQKWGAGVTGYALEPPTGKKGSAIRFLKTWWAQVRAESHHHGKPILEVLILDIFFQRRILKRSPIRWFMHFTIFAGWMSLFALSGLMFAVEMTEKIGIELPFTPAEFREMLSLPNYIFGYILLIGVMIAVVRRLFVSEVREASIMYDWVLLGGVFIVTISGFIADGIRTGIIWGFGLDPVTAPPAALFHSVISLLFCIAYIPYSKYIHVIATPLAILANKGGE.

5 helical membrane-spanning segments follow: residues 15–35 (FVQI…GMIG), 104–124 (FMHF…GLMF), 147–167 (LSLP…IAVV), 180–200 (IMYD…GFIA), and 218–238 (APPA…AYIP).

It belongs to the HdrE family. In terms of assembly, the dihydromethanophenazine:CoB--CoM heterodisulfide reductase is composed of two subunits; HdrD and HdrE. Heme b serves as cofactor.

It is found in the cell membrane. The enzyme catalyses methanophenazine + coenzyme B + coenzyme M = dihydromethanophenazine + coenzyme M-coenzyme B heterodisulfide. It participates in cofactor metabolism; coenzyme M-coenzyme B heterodisulfide reduction; coenzyme B and coenzyme M from coenzyme M-coenzyme B heterodisulfide: step 1/1. Its function is as follows. Part of a complex that catalyzes the reversible reduction of CoM-S-S-CoB to the thiol-coenzymes H-S-CoM (coenzyme M) and H-S-CoB (coenzyme B). HdrE may be responsible for anchoring the complex to the membrane. This Methanosarcina mazei (strain ATCC BAA-159 / DSM 3647 / Goe1 / Go1 / JCM 11833 / OCM 88) (Methanosarcina frisia) protein is Dihydromethanophenazine:CoB--CoM heterodisulfide reductase subunit E (hdrE).